Reading from the N-terminus, the 471-residue chain is DnaJ protein P58IPK homolog B (471 aa).

The N-terminal stretch at 1 to 24 (MARWPWRWRVLLPLLLLHSSPVFA) is a signal peptide. 8 TPR repeats span residues 32 to 65 (PSTLFKRASEMMNLRKYDGSLGLLNAVLEVDPNH), 66 to 99 (SEAYRQRASVLRHKCRYKEAEGDYSKYLELKPGS), 112 to 146 (AQNALESAYGQFESHDFSKVLEYINKIVLVFSPNC), 148 to 180 (KAKLLKAKALLALEDYSSVISETGFILKEDEDN), 181 to 214 (LDALLLRGRAYYYLADHDVASRHYQKGLRLDPEH), 227 to 260 (LLKKTKSAEDNAAKGKLRVSAEDYKAALAMDPDH), 265 to 298 (VHLYLGLCKVLVKLGRGKEAISSCTEALNIDGEL), and 300 to 332 (DALTQRGEAKLLTEDWEGAVQDLKEASQKSPQD). N-linked (GlcNAc...) asparagine glycosylation is present at Asn64. In terms of domain architecture, J spans 353 to 419 (DWYKILGISK…DKRVRYDRGE (67 aa)).

Interacts with BIP1.

The protein localises to the endoplasmic reticulum lumen. Functionally, may play a role in protein folding in the endoplasmic reticulum. The sequence is that of DnaJ protein P58IPK homolog B from Oryza sativa subsp. japonica (Rice).